An 807-amino-acid polypeptide reads, in one-letter code: AP-5 complex subunit zeta-1 (807 aa).

Probably part of the adaptor protein complex 5 (AP-5) a tetramer composed of AP5B1, AP5M1, AP5S1 and AP5Z1. Interacts with ZFYVE26 and SPG11.

The protein localises to the cytoplasm. It is found in the nucleus. In terms of biological role, as part of AP-5, a probable fifth adaptor protein complex it may be involved in endosomal transport. The chain is AP-5 complex subunit zeta-1 (Ap5z1) from Mus musculus (Mouse).